The primary structure comprises 429 residues: UDP-N-acetylglucosamine 1-carboxyvinyltransferase (429 aa).

Position 22 to 23 (22 to 23) interacts with phosphoenolpyruvate; the sequence is KN. Arg-102 serves as a coordination point for UDP-N-acetyl-alpha-D-glucosamine. Cys-126 acts as the Proton donor in catalysis. The residue at position 126 (Cys-126) is a 2-(S-cysteinyl)pyruvic acid O-phosphothioketal. UDP-N-acetyl-alpha-D-glucosamine-binding positions include 131-135, Asp-316, and Ile-338; that span reads RPVDL.

This sequence belongs to the EPSP synthase family. MurA subfamily.

Its subcellular location is the cytoplasm. It carries out the reaction phosphoenolpyruvate + UDP-N-acetyl-alpha-D-glucosamine = UDP-N-acetyl-3-O-(1-carboxyvinyl)-alpha-D-glucosamine + phosphate. It participates in cell wall biogenesis; peptidoglycan biosynthesis. Functionally, cell wall formation. Adds enolpyruvyl to UDP-N-acetylglucosamine. This chain is UDP-N-acetylglucosamine 1-carboxyvinyltransferase, found in Methylobacterium sp. (strain 4-46).